Reading from the N-terminus, the 354-residue chain is Homeobox protein Nkx-2.4 (354 aa).

Residues 189 to 248 (RRKRRVLFSQAQVYELERRFKQQKYLSAPEREHLASMIHLTPTQVKIWFQNHRYKMKRQA) constitute a DNA-binding region (homeobox). The tract at residues 246–329 (RQAKDKAAQQ…PALHGPGGGL (84 aa)) is disordered. Positions 263–272 (GPPPPPPPSP) are enriched in pro residues.

This sequence belongs to the NK-2 homeobox family.

It is found in the nucleus. In terms of biological role, probable transcription factor. The chain is Homeobox protein Nkx-2.4 (NKX2-4) from Homo sapiens (Human).